Reading from the N-terminus, the 154-residue chain is MVLSEGEWQLVLHVWAKVEADIAGHGQDILIRLFKHHPETLEKFDRFKHLKSEAEMKASEDLKKHGVTVLTALGAILKKKGHHEAELKPLAQSHATKHKIPIKYLEFISEAIIHVLHSRHPADFGADAQGAMSKALELFRKDIAAKYKELGYQG.

The 147-residue stretch at 2–148 (VLSEGEWQLV…FRKDIAAKYK (147 aa)) folds into the Globin domain. S4 bears the Phosphoserine mark. H65 is a nitrite binding site. H65 lines the O2 pocket. Position 68 is a phosphothreonine (T68). Residue H94 coordinates heme b.

It belongs to the globin family. In terms of assembly, monomeric.

The protein localises to the cytoplasm. It localises to the sarcoplasm. It carries out the reaction Fe(III)-heme b-[protein] + nitric oxide + H2O = Fe(II)-heme b-[protein] + nitrite + 2 H(+). The enzyme catalyses H2O2 + AH2 = A + 2 H2O. In terms of biological role, monomeric heme protein which primary function is to store oxygen and facilitate its diffusion within muscle tissues. Reversibly binds oxygen through a pentacoordinated heme iron and enables its timely and efficient release as needed during periods of heightened demand. Depending on the oxidative conditions of tissues and cells, and in addition to its ability to bind oxygen, it also has a nitrite reductase activity whereby it regulates the production of bioactive nitric oxide. Under stress conditions, like hypoxia and anoxia, it also protects cells against reactive oxygen species thanks to its pseudoperoxidase activity. The chain is Myoglobin (MB) from Kogia breviceps (Pygmy sperm whale).